The primary structure comprises 480 residues: Aspartyl/glutamyl-tRNA(Asn/Gln) amidotransferase subunit B (480 aa).

Belongs to the GatB/GatE family. GatB subfamily. As to quaternary structure, heterotrimer of A, B and C subunits.

The catalysed reaction is L-glutamyl-tRNA(Gln) + L-glutamine + ATP + H2O = L-glutaminyl-tRNA(Gln) + L-glutamate + ADP + phosphate + H(+). It carries out the reaction L-aspartyl-tRNA(Asn) + L-glutamine + ATP + H2O = L-asparaginyl-tRNA(Asn) + L-glutamate + ADP + phosphate + 2 H(+). Allows the formation of correctly charged Asn-tRNA(Asn) or Gln-tRNA(Gln) through the transamidation of misacylated Asp-tRNA(Asn) or Glu-tRNA(Gln) in organisms which lack either or both of asparaginyl-tRNA or glutaminyl-tRNA synthetases. The reaction takes place in the presence of glutamine and ATP through an activated phospho-Asp-tRNA(Asn) or phospho-Glu-tRNA(Gln). The polypeptide is Aspartyl/glutamyl-tRNA(Asn/Gln) amidotransferase subunit B (Streptococcus pneumoniae (strain CGSP14)).